Consider the following 430-residue polypeptide: MRTDWNFFFCILLQAIFVVGTQTSRTLVLYDQSTEPLEEYSVYLKDLEQRNYKLEYLDINSTSTTVDLYDKEQRLFDNIIVFPTKGGKNLARQIPVKQLIKFFENEGNILCMSSPGAVPNTIRLFLNELGIYPSPKGHVIRDYFSPSSEELVVSSNHLLNKYVYNARKSEDFVFGESSAALLENREQIVPILNAPRTSFTESKGKCNSWTSGSQGFLVVGFQNLNNARLVWIGSSDFLKNKNQDSNQEFAKELLKWTFNEKSVIKSVHAVHSHADGTSYDEEPYKIKDKVIYSVGFSEWNGEEWLPHIADDIQFELRQVDPYYRLTLSPSGNDSETQYYTTGEFILPDRHGVFTFLTDYRKIGLSFTTDKDVKAIRHLANDEYPRSWEISNSWVYISAICGVIVAWIFFVVSFVTTSSVGKKLETFKKTN.

The N-terminal stretch at 1–20 (MRTDWNFFFCILLQAIFVVG) is a signal peptide. Residues 24-393 (SRTLVLYDQS…PRSWEISNSW (370 aa)) lie on the Lumenal side of the membrane. 2 N-linked (GlcNAc...) asparagine glycosylation sites follow: asparagine 60 and asparagine 332. Residues 394–414 (VYISAICGVIVAWIFFVVSFV) form a helical membrane-spanning segment. Residues 415–430 (TTSSVGKKLETFKKTN) are Cytoplasmic-facing.

The protein belongs to the DDOST 48 kDa subunit family. As to quaternary structure, component of the oligosaccharyltransferase (OST) complex, which appears to exist in two assemblies comprising OST1, OST2, OST4, OST5, STT3, SWP1, WPB1, and either OST3 or OST6. OST assembly occurs through the formation of 3 subcomplexes. Subcomplex 1 contains OST1 and OST5, subcomplex 2 contains STT3, OST3, and OST4, and subcomplex 3 contains OST2, WBP1, and SWP1. Interacts with SEC61, SBH1 and SSS1.

The protein localises to the endoplasmic reticulum membrane. It functions in the pathway protein modification; protein glycosylation. In terms of biological role, subunit of the oligosaccharyl transferase (OST) complex that catalyzes the initial transfer of a defined glycan (Glc(3)Man(9)GlcNAc(2) in eukaryotes) from the lipid carrier dolichol-pyrophosphate to an asparagine residue within an Asn-X-Ser/Thr consensus motif in nascent polypeptide chains, the first step in protein N-glycosylation. N-glycosylation occurs cotranslationally and the complex associates with the Sec61 complex at the channel-forming translocon complex that mediates protein translocation across the endoplasmic reticulum (ER). All subunits are required for a maximal enzyme activity. The sequence is that of Dolichyl-diphosphooligosaccharide--protein glycosyltransferase subunit WBP1 (WBP1) from Saccharomyces cerevisiae (strain ATCC 204508 / S288c) (Baker's yeast).